Here is a 201-residue protein sequence, read N- to C-terminus: Holliday junction branch migration complex subunit RuvA (201 aa).

The domain I stretch occupies residues 1–64 (MFAYIKGVLA…EFSHTLYGFL (64 aa)). Residues 65-143 (SYQERDIFEI…AIGHLDTSDH (79 aa)) are domain II. The segment at 144–153 (IEPLTQDPKS) is flexible linker. The domain III stretch occupies residues 153–201 (SKSVQDAMLALINLGYNQTTAQKAIKQGMKELPEEIDLAQLITVALKHV).

This sequence belongs to the RuvA family. In terms of assembly, homotetramer. Forms an RuvA(8)-RuvB(12)-Holliday junction (HJ) complex. HJ DNA is sandwiched between 2 RuvA tetramers; dsDNA enters through RuvA and exits via RuvB. An RuvB hexamer assembles on each DNA strand where it exits the tetramer. Each RuvB hexamer is contacted by two RuvA subunits (via domain III) on 2 adjacent RuvB subunits; this complex drives branch migration. In the full resolvosome a probable DNA-RuvA(4)-RuvB(12)-RuvC(2) complex forms which resolves the HJ.

Its subcellular location is the cytoplasm. The RuvA-RuvB-RuvC complex processes Holliday junction (HJ) DNA during genetic recombination and DNA repair, while the RuvA-RuvB complex plays an important role in the rescue of blocked DNA replication forks via replication fork reversal (RFR). RuvA specifically binds to HJ cruciform DNA, conferring on it an open structure. The RuvB hexamer acts as an ATP-dependent pump, pulling dsDNA into and through the RuvAB complex. HJ branch migration allows RuvC to scan DNA until it finds its consensus sequence, where it cleaves and resolves the cruciform DNA. This is Holliday junction branch migration complex subunit RuvA from Protochlamydia amoebophila (strain UWE25).